A 155-amino-acid polypeptide reads, in one-letter code: Putative pre-16S rRNA nuclease (155 aa).

This sequence belongs to the YqgF nuclease family.

The protein resides in the cytoplasm. Could be a nuclease involved in processing of the 5'-end of pre-16S rRNA. This Wolbachia pipientis wMel protein is Putative pre-16S rRNA nuclease.